We begin with the raw amino-acid sequence, 147 residues long: Large ribosomal subunit protein bL9 (147 aa).

The protein belongs to the bacterial ribosomal protein bL9 family.

Binds to the 23S rRNA. The chain is Large ribosomal subunit protein bL9 from Phocaeicola vulgatus (strain ATCC 8482 / DSM 1447 / JCM 5826 / CCUG 4940 / NBRC 14291 / NCTC 11154) (Bacteroides vulgatus).